A 261-amino-acid chain; its full sequence is MARRQVGSTRRVGDGGSFPFAGALHSKSRSSPLLSICLVLVGACLLIGYAYSGPGIFKSIKEVSKVTGDYSCTAEVQRAIPVLKKAYGDGMRKVLHVGPDTCSVVSSLLKEEETEAWGVEPYDIEDADSHCKSFVSKGLVRVADIKFPLPYRAKSFSLVIVSDALDYLSPKYLNKTVPELARVASDGVVLFAGLPGQQRAKVAELSKFGRPAKMRSASWWNRFFVQTNLEENDAPSKKFEQAVSKGLYKPACQVFHLKPLH.

Residues 1–35 (MARRQVGSTRRVGDGGSFPFAGALHSKSRSSPLLS) lie on the Cytoplasmic side of the membrane. A helical membrane pass occupies residues 36–56 (ICLVLVGACLLIGYAYSGPGI). Topologically, residues 57 to 261 (FKSIKEVSKV…CQVFHLKPLH (205 aa)) are lumenal. Residue Asn174 is glycosylated (N-linked (GlcNAc...) asparagine).

The protein belongs to the class I-like SAM-binding methyltransferase superfamily.

The protein localises to the golgi apparatus membrane. Together with CGR3, required for homogalacturonan pectins (HG) methylesterification in the Golgi apparatus prior to integration into cell walls, essential for general growth and development. Promotes rosette growth. Impacts carbon (C) partitioning, photosynthesis and respiration efficiency by influencing leaf mesophyll cell walls morphology and physiology; pectin methylesterification modulates both expansion and positioning of cells in leaves, probably by changing cell walls plasticity. This is Probable pectin methylesterase CGR2 from Arabidopsis thaliana (Mouse-ear cress).